The chain runs to 399 residues: Subtilisin-like protease 4 (399 aa).

Residues 1–19 form the signal peptide; it reads MVCLKTLSVFLAAFAVADA. Positions 20 to 118 are excised as a propeptide; that stretch reads RAVFKTQSNK…VEQDQVVRIS (99 aa). Positions 38–117 constitute an Inhibitor I9 domain; sequence YIVVMKDGVS…YVEQDQVVRI (80 aa). Positions 128 to 399 constitute a Peptidase S8 domain; sequence SWGLGRVSHR…NRLLYNGSGQ (272 aa). Active-site charge relay system residues include D160 and H191. N-linked (GlcNAc...) asparagine glycosylation is present at N252. The active-site Charge relay system is S346. Residues 380 to 392 are compositionally biased toward polar residues; the sequence is AISNPGSGTTNRL. The tract at residues 380 to 399 is disordered; the sequence is AISNPGSGTTNRLLYNGSGQ. Residue N395 is glycosylated (N-linked (GlcNAc...) asparagine).

It belongs to the peptidase S8 family.

The protein localises to the secreted. Secreted subtilisin-like serine protease with keratinolytic activity that contributes to pathogenicity. This Arthroderma gypseum (strain ATCC MYA-4604 / CBS 118893) (Microsporum gypseum) protein is Subtilisin-like protease 4 (SUB4).